Reading from the N-terminus, the 122-residue chain is Large ribosomal subunit protein uL18 (122 aa).

A disordered region spans residues 1-24 (MLKKADKNANRLQRHKRVRRKISG). Residues 12–22 (LQRHKRVRRKI) show a composition bias toward basic residues.

This sequence belongs to the universal ribosomal protein uL18 family. Part of the 50S ribosomal subunit; part of the 5S rRNA/L5/L18/L25 subcomplex. Contacts the 5S and 23S rRNAs.

In terms of biological role, this is one of the proteins that bind and probably mediate the attachment of the 5S RNA into the large ribosomal subunit, where it forms part of the central protuberance. The protein is Large ribosomal subunit protein uL18 of Clostridioides difficile (strain 630) (Peptoclostridium difficile).